A 263-amino-acid polypeptide reads, in one-letter code: 3-deoxy-manno-octulosonate cytidylyltransferase (263 aa).

It belongs to the KdsB family.

It is found in the cytoplasm. The catalysed reaction is 3-deoxy-alpha-D-manno-oct-2-ulosonate + CTP = CMP-3-deoxy-beta-D-manno-octulosonate + diphosphate. The protein operates within nucleotide-sugar biosynthesis; CMP-3-deoxy-D-manno-octulosonate biosynthesis; CMP-3-deoxy-D-manno-octulosonate from 3-deoxy-D-manno-octulosonate and CTP: step 1/1. Its pathway is bacterial outer membrane biogenesis; lipopolysaccharide biosynthesis. Activates KDO (a required 8-carbon sugar) for incorporation into bacterial lipopolysaccharide in Gram-negative bacteria. The sequence is that of 3-deoxy-manno-octulosonate cytidylyltransferase from Burkholderia cenocepacia (strain ATCC BAA-245 / DSM 16553 / LMG 16656 / NCTC 13227 / J2315 / CF5610) (Burkholderia cepacia (strain J2315)).